Reading from the N-terminus, the 556-residue chain is Formate--tetrahydrofolate ligase (556 aa).

Residue 65–72 (TPAGEGKS) participates in ATP binding.

This sequence belongs to the formate--tetrahydrofolate ligase family.

The catalysed reaction is (6S)-5,6,7,8-tetrahydrofolate + formate + ATP = (6R)-10-formyltetrahydrofolate + ADP + phosphate. It functions in the pathway one-carbon metabolism; tetrahydrofolate interconversion. The chain is Formate--tetrahydrofolate ligase from Streptococcus uberis (strain ATCC BAA-854 / 0140J).